A 223-amino-acid polypeptide reads, in one-letter code: Ubiquitin carboxyl-terminal hydrolase isozyme L1 (223 aa).

Position 1 is an N-acetylmethionine (Met1). The UCH catalytic domain occupies 2–221; the sequence is QLKPMEINPE…VRFSAVALCK (220 aa). Positions 5 to 10 are interaction with ubiquitin; the sequence is PMEINP. Cys90 serves as the catalytic Nucleophile. A Phosphoserine modification is found at Ser125. Catalysis depends on His161, which acts as the Proton donor. Residues 211 to 216 are interaction with ubiquitin; it reads EVRFSA. Cys220 carries the S-farnesyl cysteine lipid modification. A propeptide spans 221–223 (removed in mature form); the sequence is KAA.

Belongs to the peptidase C12 family. In terms of assembly, monomer. Homodimer. Interacts with COPS5 and SNCA. Post-translationally, O-glycosylated. As to expression, expressed in brain, where it is found in neurons but not in oligodendrocytes or astrocytes. Found in the ganglion cell layer and the inner nuclear layer of the retina (at protein level). Expressed in brain and testis. In the brain, expression is at its lowest in replaceable neurons of hippocampus and olfactory bulb. Highly expressed in senescent pituitary. In skeletal muscle, primarily expressed in oxidative muscle fibers.

The protein resides in the cytoplasm. The protein localises to the endoplasmic reticulum membrane. It catalyses the reaction Thiol-dependent hydrolysis of ester, thioester, amide, peptide and isopeptide bonds formed by the C-terminal Gly of ubiquitin (a 76-residue protein attached to proteins as an intracellular targeting signal).. Its function is as follows. Deubiquitinase that plays a role in the regulation of several processes such as maintenance of synaptic function, cardiac function, inflammatory response or osteoclastogenesis. Abrogates the ubiquitination of multiple proteins including WWTR1/TAZ, EGFR, HIF1A and beta-site amyloid precursor protein cleaving enzyme 1/BACE1. In addition, recognizes and hydrolyzes a peptide bond at the C-terminal glycine of ubiquitin to maintain a stable pool of monoubiquitin that is a key requirement for the ubiquitin-proteasome and the autophagy-lysosome pathways. Regulates amyloid precursor protein/APP processing by promoting BACE1 degradation resulting in decreased amyloid beta production. Plays a role in the immune response by regulating the ability of MHC I molecules to reach cross-presentation compartments competent for generating Ag-MHC I complexes. Mediates the 'Lys-48'-linked deubiquitination of the transcriptional coactivator WWTR1/TAZ leading to its stabilization and inhibition of osteoclastogenesis. Deubiquitinates and stabilizes epidermal growth factor receptor EGFR to prevent its degradation and to activate its downstream mediators. Modulates oxidative activity in skeletal muscle by regulating key mitochondrial oxidative proteins. Enhances the activity of hypoxia-inducible factor 1-alpha/HIF1A by abrogateing its VHL E3 ligase-mediated ubiquitination and consequently inhibiting its degradation. This chain is Ubiquitin carboxyl-terminal hydrolase isozyme L1 (Uchl1), found in Mus musculus (Mouse).